The chain runs to 731 residues: 1,4-alpha-glucan branching enzyme GlgB 2 (731 aa).

Aspartate 410 serves as the catalytic Nucleophile. Catalysis depends on glutamate 463, which acts as the Proton donor.

Belongs to the glycosyl hydrolase 13 family. GlgB subfamily. Monomer.

It catalyses the reaction Transfers a segment of a (1-&gt;4)-alpha-D-glucan chain to a primary hydroxy group in a similar glucan chain.. The protein operates within glycan biosynthesis; glycogen biosynthesis. Functionally, catalyzes the formation of the alpha-1,6-glucosidic linkages in glycogen by scission of a 1,4-alpha-linked oligosaccharide from growing alpha-1,4-glucan chains and the subsequent attachment of the oligosaccharide to the alpha-1,6 position. This Xanthomonas oryzae pv. oryzae (strain MAFF 311018) protein is 1,4-alpha-glucan branching enzyme GlgB 2.